Reading from the N-terminus, the 620-residue chain is 1-deoxy-D-xylulose-5-phosphate synthase (620 aa).

Thiamine diphosphate contacts are provided by residues histidine 80 and 121 to 123 (GHS). Position 152 (aspartate 152) interacts with Mg(2+). Residues 153–154 (GA), asparagine 181, tyrosine 288, and glutamate 370 each bind thiamine diphosphate. Asparagine 181 is a Mg(2+) binding site.

This sequence belongs to the transketolase family. DXPS subfamily. In terms of assembly, homodimer. It depends on Mg(2+) as a cofactor. Thiamine diphosphate serves as cofactor.

It catalyses the reaction D-glyceraldehyde 3-phosphate + pyruvate + H(+) = 1-deoxy-D-xylulose 5-phosphate + CO2. The protein operates within metabolic intermediate biosynthesis; 1-deoxy-D-xylulose 5-phosphate biosynthesis; 1-deoxy-D-xylulose 5-phosphate from D-glyceraldehyde 3-phosphate and pyruvate: step 1/1. Functionally, catalyzes the acyloin condensation reaction between C atoms 2 and 3 of pyruvate and glyceraldehyde 3-phosphate to yield 1-deoxy-D-xylulose-5-phosphate (DXP). The chain is 1-deoxy-D-xylulose-5-phosphate synthase from Shigella dysenteriae serotype 1 (strain Sd197).